We begin with the raw amino-acid sequence, 328 residues long: Formimidoylglutamase (328 aa).

Mn(2+)-binding residues include His133, Asp159, His161, Asp163, Asp253, and Asp255.

Belongs to the arginase family. It depends on Mn(2+) as a cofactor.

It carries out the reaction N-formimidoyl-L-glutamate + H2O = formamide + L-glutamate. Its pathway is amino-acid degradation; L-histidine degradation into L-glutamate; L-glutamate from N-formimidoyl-L-glutamate (hydrolase route): step 1/1. In terms of biological role, catalyzes the conversion of N-formimidoyl-L-glutamate to L-glutamate and formamide. The protein is Formimidoylglutamase of Streptococcus pyogenes serotype M6 (strain ATCC BAA-946 / MGAS10394).